The sequence spans 187 residues: UPF0302 protein SERP1032 (187 aa).

It belongs to the UPF0302 family.

The sequence is that of UPF0302 protein SERP1032 from Staphylococcus epidermidis (strain ATCC 35984 / DSM 28319 / BCRC 17069 / CCUG 31568 / BM 3577 / RP62A).